A 268-amino-acid chain; its full sequence is Small ribosomal subunit protein uS10m (268 aa).

The transit peptide at 1-64 (MIIRPVVRSL…RITTTTEAPK (64 aa)) directs the protein to the mitochondrion.

It belongs to the universal ribosomal protein uS10 family. As to quaternary structure, component of the mitochondrial small ribosomal subunit (mt-SSU). Mature N.crassa 74S mitochondrial ribosomes consist of a small (37S) and a large (54S) subunit. The 37S small subunit contains a 16S ribosomal RNA (16S mt-rRNA) and 32 different proteins. The 54S large subunit contains a 23S rRNA (23S mt-rRNA) and 42 different proteins.

It localises to the mitochondrion. Functionally, component of the mitochondrial ribosome (mitoribosome), a dedicated translation machinery responsible for the synthesis of mitochondrial genome-encoded proteins, including at least some of the essential transmembrane subunits of the mitochondrial respiratory chain. The mitoribosomes are attached to the mitochondrial inner membrane and translation products are cotranslationally integrated into the membrane. The chain is Small ribosomal subunit protein uS10m (mrp-10) from Neurospora crassa (strain ATCC 24698 / 74-OR23-1A / CBS 708.71 / DSM 1257 / FGSC 987).